The chain runs to 1043 residues: Polycomb protein Pcl (1043 aa).

4 disordered regions span residues 1-34 (MMNNHFHLQHDHPPQNVAHPFMQQPSTAVPSAPP), 271-302 (PDSTTTTPQTPPTTPEAMSSPGKSSPSPPLLA), 317-346 (FKTVEAAPPTPPTPPSPPPPPPAPPVAAPS), and 395-422 (KLRKLGGGSSITAGGGGASTTESTNTSP). A compositionally biased stretch (low complexity) spans 25-34 (PSTAVPSAPP). Positions 324-344 (PPTPPTPPSPPPPPPAPPVAA) are enriched in pro residues. Residues 349 to 404 (VTYALQEDVFIKCNDGRFYLGTIIDQTSDQYLIRFDDQSEQWCEPDKLRKLGGGSS) enclose the Tudor domain. A compositionally biased stretch (gly residues) spans 399–412 (LGGGSSITAGGGGA). 2 consecutive PHD-type zinc fingers follow at residues 424–472 (GPMC…CAKP) and 512–560 (QIYC…VFCC). Residues 737 to 757 (AKKQAAQKADKHDELPLKPDL) are compositionally biased toward basic and acidic residues. Disordered regions lie at residues 737–819 (AKKQ…TSSL) and 931–985 (AKDL…PGHS). Residues 783-792 (SRKRKAFRLS) are compositionally biased toward basic residues. Basic and acidic residues predominate over residues 793-804 (KRYDNSRNHCDL). Serine 805 and serine 806 each carry phosphoserine. Low complexity predominate over residues 807–819 (DENSSSSRGTSSL). Positions 945 to 954 (THGRLLRQRP) are enriched in basic residues. Residues 955 to 977 (QKQSPSQSRRNSTSSTATSSSSN) are compositionally biased toward low complexity.

It belongs to the Polycomblike family. Component of a form of the Esc/E(z) complex present specifically during early embryogenesis which is composed of Caf1-55, esc, E(z), Su(z)12, Pcl and HDAC1/Rpd3. This complex is distinct from the PRC1 complex, which contains many other PcG proteins like Pc, Ph, Psc, Su(z)2. The two complexes however cooperate and interact together during the first 3 hours of development to establish PcG silencing. Interacts with corto in vitro.

The protein resides in the nucleus. Its subcellular location is the chromosome. Functionally, polycomb group (PcG) protein. While PcG proteins are generally required to maintain the transcriptionally repressive state of homeotic genes throughout development, this protein is specifically required during the first 6 hours of embryogenesis to establish the repressed state. Component of the Esc/E(z) complex, which methylates 'Lys-9' and 'Lys-27' residues of histone H3, leading to transcriptional repression of the affected target gene. The Esc/E(z) complex is necessary but not sufficient for the repression of homeotic target genes, suggesting that the recruitment of the distinct PRC1 complex is also required. Required for the correct spatial expression of the homeotic genes of the Antennapedia and Bithorax complexes. The protein is Polycomb protein Pcl (Pcl) of Drosophila melanogaster (Fruit fly).